Reading from the N-terminus, the 399-residue chain is Beta-1,4-galactosyltransferase 1 (399 aa).

Residues Met-1–Arg-24 are Cytoplasmic-facing. A helical; Signal-anchor for type II membrane protein membrane pass occupies residues Leu-25–Gly-44. Residues Arg-45 to Arg-399 are Lumenal-facing. A disordered region spans residues Gln-61 to Asn-113. Over residues Ala-82–Arg-95 the composition is skewed to pro residues. N-linked (GlcNAc...) asparagine glycosylation occurs at Asn-113. A disulfide bridge links Cys-131 with Cys-173. UDP-alpha-D-galactose-binding positions include Pro-184–Arg-188, Phe-223–Arg-225, Val-250–Asp-251, and Trp-311. Residues Cys-244 and Cys-263 are joined by a disulfide bond. Asp-251 is a binding site for Mn(2+). Gly-313–Asp-316 contributes to the N-acetyl-D-glucosamine binding site. His-344 lines the Mn(2+) pocket. His-344–Arg-346 is a binding site for UDP-alpha-D-galactose. Arg-356 provides a ligand contact to N-acetyl-D-glucosamine.

It belongs to the glycosyltransferase 7 family. Homodimer; and heterodimer with alpha-lactalbumin to form lactose synthase. Interacts (via N-terminal cytoplasmic domain) with UBE2Q1 (via N-terminus); the interaction is direct. Mn(2+) is required as a cofactor. The soluble form derives from the membrane forms by proteolytic processing.

The protein resides in the golgi apparatus. The protein localises to the golgi stack membrane. It localises to the cell membrane. Its subcellular location is the cell surface. It is found in the cell projection. The protein resides in the filopodium. The protein localises to the secreted. It catalyses the reaction D-glucose + UDP-alpha-D-galactose = lactose + UDP + H(+). The catalysed reaction is an N-acetyl-beta-D-glucosaminyl derivative + UDP-alpha-D-galactose = a beta-D-galactosyl-(1-&gt;4)-N-acetyl-beta-D-glucosaminyl derivative + UDP + H(+). It carries out the reaction N-acetyl-D-glucosamine + UDP-alpha-D-galactose = beta-D-galactosyl-(1-&gt;4)-N-acetyl-D-glucosamine + UDP + H(+). The enzyme catalyses a beta-D-GlcNAc-(1-&gt;3)-beta-D-Gal-(1-&gt;4)-beta-D-Glc-(1&lt;-&gt;1)-Cer(d18:1(4E)) + UDP-alpha-D-galactose = a neolactoside nLc4Cer(d18:1(4E)) + UDP + H(+). It catalyses the reaction a beta-D-glucosylceramide + UDP-alpha-D-galactose = a beta-D-galactosyl-(1-&gt;4)-beta-D-glucosyl-(1&lt;-&gt;1)-ceramide + UDP + H(+). The catalysed reaction is a neolactoside IV(3)-beta-GlcNAc-nLc4Cer + UDP-alpha-D-galactose = a neolactoside nLc6Cer + UDP + H(+). Its pathway is protein modification; protein glycosylation. Functionally, the Golgi complex form catalyzes the production of lactose in the lactating mammary gland and could also be responsible for the synthesis of complex-type N-linked oligosaccharides in many glycoproteins as well as the carbohydrate moieties of glycolipids. The cell surface form functions as a recognition molecule during a variety of cell to cell and cell to matrix interactions, as those occurring during development and egg fertilization, by binding to specific oligosaccharide ligands on opposing cells or in the extracellular matrix. The secreted form is responsible for the synthesis of complex-type to N-linked oligosaccharides in many glycoproteins as well as the carbohydrate moieties of glycolipids. The polypeptide is Beta-1,4-galactosyltransferase 1 (Mus musculus (Mouse)).